The following is a 132-amino-acid chain: Small ribosomal subunit protein uS12 (132 aa).

Aspartate 89 is subject to 3-methylthioaspartic acid. The interval 106–132 is disordered; the sequence is GVKDRKKSRSKYGTKKPKEAAKTAAKK. The segment covering 109–120 has biased composition (basic residues); the sequence is DRKKSRSKYGTK.

This sequence belongs to the universal ribosomal protein uS12 family. In terms of assembly, part of the 30S ribosomal subunit. Contacts proteins S8 and S17. May interact with IF1 in the 30S initiation complex.

Functionally, with S4 and S5 plays an important role in translational accuracy. Interacts with and stabilizes bases of the 16S rRNA that are involved in tRNA selection in the A site and with the mRNA backbone. Located at the interface of the 30S and 50S subunits, it traverses the body of the 30S subunit contacting proteins on the other side and probably holding the rRNA structure together. The combined cluster of proteins S8, S12 and S17 appears to hold together the shoulder and platform of the 30S subunit. In Thermus thermophilus (strain ATCC BAA-163 / DSM 7039 / HB27), this protein is Small ribosomal subunit protein uS12 (rpsL).